The primary structure comprises 721 residues: uncharacterized protein (721 aa).

A helical membrane pass occupies residues 6–26; it reads QLIFVNFYVILIIWWFVMGIL. 308 to 315 is a binding site for ATP; the sequence is GGTGSGKT.

This sequence belongs to the GSP E family. This protein undergoes a protein self splicing that involves a post-translational excision of the intervening region (intein) followed by peptide ligation.

The protein localises to the membrane. This is an uncharacterized protein from Methanocaldococcus jannaschii (strain ATCC 43067 / DSM 2661 / JAL-1 / JCM 10045 / NBRC 100440) (Methanococcus jannaschii).